The chain runs to 212 residues: Probable nicotinate-nucleotide adenylyltransferase (212 aa).

The protein belongs to the NadD family.

It carries out the reaction nicotinate beta-D-ribonucleotide + ATP + H(+) = deamido-NAD(+) + diphosphate. The protein operates within cofactor biosynthesis; NAD(+) biosynthesis; deamido-NAD(+) from nicotinate D-ribonucleotide: step 1/1. Its function is as follows. Catalyzes the reversible adenylation of nicotinate mononucleotide (NaMN) to nicotinic acid adenine dinucleotide (NaAD). This chain is Probable nicotinate-nucleotide adenylyltransferase, found in Saccharopolyspora erythraea (strain ATCC 11635 / DSM 40517 / JCM 4748 / NBRC 13426 / NCIMB 8594 / NRRL 2338).